A 576-amino-acid polypeptide reads, in one-letter code: MSELIDVKTILSGTELGPLADNERLKRESKYLRGTIVEDLQDRITGGFTKDNFQLIRFHGMYQQDDRDIRAERAKQKLEPLHNVMLRARMPGGIITPKQWLAIDKFAEEHTSYGSLRLTTRQTFQFHGVLKPNIKLMHQTLNSIGIDSIATAGDVNRNVLCTTNPVESELHQEAYEWAKKISEHLLPKTRAYAEIWLDGEKLETTDEEPILGSNYLPRKFKTTVVIPPQNDVDVHANDLNFIAIADNGKLVGFNVLVGGGLAMTHGDTATYPRKADDFGFVPLDKTLDVAAAVVTTQRDWGNRSNRKNAKTKYTLDRVGSDVFKGEVEKRAGVQFEKSRPYELTERGDRIGWVEGIDGKHHLALFIENGRLLDYPGKPLKTGVAEIAKVHQGDFRMTANQNLIVAGVPSEQKDHIEQIARAHGLIDDTHSEQRKNSMACVAFPTCPLAMAEAERFLPEFVTEIEGVLKKHNLPEEDNIIFRVTGCPNGCGRAMLAEIGLVGKAPGRYNFHLGGNRSGTRVPKMYKENITDRQILTEIDQLVGRWATERNENEGFGDFTIRAGIVDEVKVSKRDFHA.

[4Fe-4S] cluster-binding residues include Cys-439, Cys-445, Cys-485, and Cys-489. Residue Cys-489 coordinates siroheme.

It belongs to the nitrite and sulfite reductase 4Fe-4S domain family. In terms of assembly, alpha(8)-beta(8). The alpha component is a flavoprotein, the beta component is a hemoprotein. It depends on siroheme as a cofactor. [4Fe-4S] cluster serves as cofactor.

The catalysed reaction is hydrogen sulfide + 3 NADP(+) + 3 H2O = sulfite + 3 NADPH + 4 H(+). It participates in sulfur metabolism; hydrogen sulfide biosynthesis; hydrogen sulfide from sulfite (NADPH route): step 1/1. In terms of biological role, component of the sulfite reductase complex that catalyzes the 6-electron reduction of sulfite to sulfide. This is one of several activities required for the biosynthesis of L-cysteine from sulfate. This chain is Sulfite reductase [NADPH] hemoprotein beta-component, found in Aliivibrio fischeri (strain ATCC 700601 / ES114) (Vibrio fischeri).